The sequence spans 200 residues: Holliday junction branch migration complex subunit RuvA (200 aa).

The domain I stretch occupies residues 1–64 (MYAYFRGRLV…EDALQLYGFA (64 aa)). Residues 65-143 (TEEEKQLFRL…KLAPVGSAVA (79 aa)) are domain II. Residues 144-154 (SVAADRGGFRE) are flexible linker. A domain III region spans residues 154–200 (EDAVNALMTLGFPRPVANQAVGCALEPEPDASLEVVIKRALATMHNR).

This sequence belongs to the RuvA family. Homotetramer. Forms an RuvA(8)-RuvB(12)-Holliday junction (HJ) complex. HJ DNA is sandwiched between 2 RuvA tetramers; dsDNA enters through RuvA and exits via RuvB. An RuvB hexamer assembles on each DNA strand where it exits the tetramer. Each RuvB hexamer is contacted by two RuvA subunits (via domain III) on 2 adjacent RuvB subunits; this complex drives branch migration. In the full resolvosome a probable DNA-RuvA(4)-RuvB(12)-RuvC(2) complex forms which resolves the HJ.

It is found in the cytoplasm. Its function is as follows. The RuvA-RuvB-RuvC complex processes Holliday junction (HJ) DNA during genetic recombination and DNA repair, while the RuvA-RuvB complex plays an important role in the rescue of blocked DNA replication forks via replication fork reversal (RFR). RuvA specifically binds to HJ cruciform DNA, conferring on it an open structure. The RuvB hexamer acts as an ATP-dependent pump, pulling dsDNA into and through the RuvAB complex. HJ branch migration allows RuvC to scan DNA until it finds its consensus sequence, where it cleaves and resolves the cruciform DNA. In Chlorobium phaeovibrioides (strain DSM 265 / 1930) (Prosthecochloris vibrioformis (strain DSM 265)), this protein is Holliday junction branch migration complex subunit RuvA.